A 344-amino-acid polypeptide reads, in one-letter code: MSDRLISATAQSEDNDLELSLRPRRLSEYIGQQKAKETISIFVEAARQRGEPLDHVLLFGPPGLGKTTLSNIIANEMAVNIRTTSGPAIERQGDLAAILTNLAPGDVLFIDEIHRLSKAVEEILYPAMEDFALDIVLGKGPGARSIRLDLPKFTLIGATTRAGMLASPLRDRFGIISRLEFYNNEDLTRIVTRAADILKVVIDRSGAEEIARRSRGTPRVANRLLKRVRDYAQVRAQGDITADVAAEALEFFEVDPLGLDHTDRRLLSSIIEKFNGGPVGLDTIAAAISEETDTVEDVLEPFLMQMGLITRTPRGRVVTPQAYKHLGIPMNRETQKGLEQNSLF.

The segment at 1–182 (MSDRLISATA…FGIISRLEFY (182 aa)) is large ATPase domain (RuvB-L). Residues L21, R22, G63, K66, T67, T68, 129–131 (EDF), R172, Y182, and R219 each bind ATP. Mg(2+) is bound at residue T67. The interval 183 to 253 (NNEDLTRIVT…VAAEALEFFE (71 aa)) is small ATPAse domain (RuvB-S). Residues 256 to 344 (PLGLDHTDRR…QKGLEQNSLF (89 aa)) are head domain (RuvB-H). DNA-binding residues include R311 and R316.

This sequence belongs to the RuvB family. As to quaternary structure, homohexamer. Forms an RuvA(8)-RuvB(12)-Holliday junction (HJ) complex. HJ DNA is sandwiched between 2 RuvA tetramers; dsDNA enters through RuvA and exits via RuvB. An RuvB hexamer assembles on each DNA strand where it exits the tetramer. Each RuvB hexamer is contacted by two RuvA subunits (via domain III) on 2 adjacent RuvB subunits; this complex drives branch migration. In the full resolvosome a probable DNA-RuvA(4)-RuvB(12)-RuvC(2) complex forms which resolves the HJ.

The protein localises to the cytoplasm. The catalysed reaction is ATP + H2O = ADP + phosphate + H(+). The RuvA-RuvB-RuvC complex processes Holliday junction (HJ) DNA during genetic recombination and DNA repair, while the RuvA-RuvB complex plays an important role in the rescue of blocked DNA replication forks via replication fork reversal (RFR). RuvA specifically binds to HJ cruciform DNA, conferring on it an open structure. The RuvB hexamer acts as an ATP-dependent pump, pulling dsDNA into and through the RuvAB complex. RuvB forms 2 homohexamers on either side of HJ DNA bound by 1 or 2 RuvA tetramers; 4 subunits per hexamer contact DNA at a time. Coordinated motions by a converter formed by DNA-disengaged RuvB subunits stimulates ATP hydrolysis and nucleotide exchange. Immobilization of the converter enables RuvB to convert the ATP-contained energy into a lever motion, pulling 2 nucleotides of DNA out of the RuvA tetramer per ATP hydrolyzed, thus driving DNA branch migration. The RuvB motors rotate together with the DNA substrate, which together with the progressing nucleotide cycle form the mechanistic basis for DNA recombination by continuous HJ branch migration. Branch migration allows RuvC to scan DNA until it finds its consensus sequence, where it cleaves and resolves cruciform DNA. The sequence is that of Holliday junction branch migration complex subunit RuvB from Desulforamulus reducens (strain ATCC BAA-1160 / DSM 100696 / MI-1) (Desulfotomaculum reducens).